Reading from the N-terminus, the 72-residue chain is Large ribosomal subunit protein bL31 (72 aa).

4 residues coordinate Zn(2+): Cys-17, Cys-19, Cys-37, and Cys-40.

The protein belongs to the bacterial ribosomal protein bL31 family. Type A subfamily. As to quaternary structure, part of the 50S ribosomal subunit. Zn(2+) is required as a cofactor.

In terms of biological role, binds the 23S rRNA. The protein is Large ribosomal subunit protein bL31 of Clostridium botulinum (strain ATCC 19397 / Type A).